The chain runs to 310 residues: L-lactate dehydrogenase (310 aa).

NAD(+)-binding positions include valine 11, aspartate 32, tyrosine 62, and 76-77 (GV). Residues glutamine 79, arginine 85, and 117 to 120 (NPVD) each bind substrate. NAD(+) is bound by residues 115–117 (ATN) and serine 140. 145–148 (DTAR) provides a ligand contact to substrate. 2 residues coordinate beta-D-fructose 1,6-bisphosphate: arginine 150 and histidine 165. Histidine 172 serves as the catalytic Proton acceptor. Phosphotyrosine is present on tyrosine 218. Substrate is bound at residue threonine 227.

The protein belongs to the LDH/MDH superfamily. LDH family. As to quaternary structure, homotetramer.

Its subcellular location is the cytoplasm. The enzyme catalyses (S)-lactate + NAD(+) = pyruvate + NADH + H(+). It participates in fermentation; pyruvate fermentation to lactate; (S)-lactate from pyruvate: step 1/1. With respect to regulation, allosterically activated by fructose 1,6-bisphosphate (FBP). Its function is as follows. Catalyzes the conversion of lactate to pyruvate. This chain is L-lactate dehydrogenase, found in Thermus thermophilus (strain ATCC BAA-163 / DSM 7039 / HB27).